The sequence spans 311 residues: D-allose-binding periplasmic protein (311 aa).

Residues 1 to 23 (MNKYLKYFSGTLVGLMLSTSAFA) form the signal peptide.

It belongs to the bacterial solute-binding protein 2 family.

Its subcellular location is the periplasm. Its function is as follows. Part of the binding-protein-dependent transport system AlsBAC for D-allose. The protein is D-allose-binding periplasmic protein (alsB) of Escherichia coli (strain K12).